The primary structure comprises 380 residues: Capsular polysaccharide biosynthesis glycosyltransferase CapM (380 aa).

The protein belongs to the glycosyltransferase group 1 family. Glycosyltransferase 4 subfamily.

The protein operates within capsule biogenesis; capsule polysaccharide biosynthesis. Its function is as follows. Required for the biosynthesis of type 1 capsular polysaccharide. This is Capsular polysaccharide biosynthesis glycosyltransferase CapM (capM) from Staphylococcus aureus.